The chain runs to 188 residues: Aspartic protease inhibitor 11 (188 aa).

The N-linked (GlcNAc...) asparagine glycan is linked to Asn-19. Cystine bridges form between Cys-48–Cys-93, Cys-142–Cys-159, and Cys-150–Cys-153.

The protein belongs to the protease inhibitor I3 (leguminous Kunitz-type inhibitor) family.

Its subcellular location is the vacuole. Inhibitor of cathepsin D (aspartic protease) and trypsin (serine protease). May protect the plant by inhibiting proteases of invading organisms. The sequence is that of Aspartic protease inhibitor 11 from Solanum tuberosum (Potato).